We begin with the raw amino-acid sequence, 217 residues long: MGQKINPLGFRLGITQNHRSYWFANKKYSKVFEEDKKIRDCIELYVQKHIKNSSNYGGIARVEIKRKTDLIQVEIYTGFPALLVESRGQGIEQLKLNVQNILSSEDRRLRMTLIEIAKPYGEPKILAKKIALKLESRVAFRRTMKKAIELAKKGNIKGIKIQIAGRLNGAEIARVEWAREGRVPLQTIRARINYCYYAAQTIYGVLGIKVWIFQDEE.

Residues Val46–Ala117 form the KH type-2 domain.

The protein belongs to the universal ribosomal protein uS3 family. As to quaternary structure, part of the 30S ribosomal subunit.

Its subcellular location is the plastid. It is found in the chloroplast. The polypeptide is Small ribosomal subunit protein uS3c (rps3) (Marchantia polymorpha (Common liverwort)).